We begin with the raw amino-acid sequence, 504 residues long: MSNIRPDEISSILKQQIERYNESVKIENTGTVLQVGDGIARIYGLDNIMAGELLEFEEKTIGIALNLETDNVGAVLMGDGRDILEGSSVKGTGKIAQIGVGDNLLGRVLNALGNPIDGKPNPNSTDYRLIEFNAPGIVSRRSVCEPIQTGITAIDAMIPIGRGQRELIIGDRQTGKTSIALDTIINQKEENVICIYVAIGQKASSVAQAVTLLEEKDALKYTVVIAANANEPATLQYIAPYTGAAIAEHFMYKGLATLIIYDDLTKQAQAYRQMSLLLKRPPGREAYPGDVFYLHSRLLERAAKLNNELGGGSMTALPIIETQAGDVSAYIPTNVISITDGQIFLSSDLFNAGIRPSINVGISVSRVGSAAQIKAMKQVAGKLKLELAQFDELQAFSQFASDLDKSTQAQLARGQRLRELLKQPQASPISVYEQIPMIYAGINGFLDDIKIDRISLFIKKLQECLSNSYPHFYEAIKESKQLSKENEEVLKKAITEVKKNLSFI.

Residue 170-177 (GDRQTGKT) participates in ATP binding.

The protein belongs to the ATPase alpha/beta chains family. F-type ATPases have 2 components, CF(1) - the catalytic core - and CF(0) - the membrane proton channel. CF(1) has five subunits: alpha(3), beta(3), gamma(1), delta(1), epsilon(1). CF(0) has four main subunits: a, b, b' and c.

The protein resides in the plastid. It is found in the chloroplast thylakoid membrane. The catalysed reaction is ATP + H2O + 4 H(+)(in) = ADP + phosphate + 5 H(+)(out). Functionally, produces ATP from ADP in the presence of a proton gradient across the membrane. The alpha chain is a regulatory subunit. This is ATP synthase subunit alpha, chloroplastic from Cyanidium caldarium (Red alga).